The primary structure comprises 103 residues: N(4)-acetylcytidine amidohydrolase (103 aa).

The ASCH domain maps to 6–101 (ITFSQRFQDD…QTQFYVIEFK (96 aa)). The active-site Proton acceptor is Lys21. Thr24 (nucleophile) is an active-site residue. Residue Glu74 is the Proton donor of the active site.

Belongs to the N(4)-acetylcytidine amidohydrolase family.

The enzyme catalyses N(4)-acetylcytidine + H2O = cytidine + acetate + H(+). The catalysed reaction is N(4)-acetyl-2'-deoxycytidine + H2O = 2'-deoxycytidine + acetate + H(+). It catalyses the reaction N(4)-acetylcytosine + H2O = cytosine + acetate + H(+). Its function is as follows. Catalyzes the hydrolysis of N(4)-acetylcytidine (ac4C). This is N(4)-acetylcytidine amidohydrolase (yqfB) from Shigella boydii serotype 4 (strain Sb227).